A 327-amino-acid chain; its full sequence is Serine/threonine-protein phosphatase PP1-beta catalytic subunit (327 aa).

Residue alanine 2 is modified to N-acetylalanine. Residues aspartate 63, histidine 65, aspartate 91, and asparagine 123 each contribute to the Mn(2+) site. Histidine 124 functions as the Proton donor in the catalytic mechanism. 2 residues coordinate Mn(2+): histidine 172 and histidine 247. A disordered region spans residues 305–327 (QYGGLNSGRPVTPPRTANPPKKR).

Belongs to the PPP phosphatase family. PP-1 subfamily. The cofactor is Mn(2+).

The protein localises to the cytoplasm. Its subcellular location is the nucleus. It catalyses the reaction O-phospho-L-seryl-[protein] + H2O = L-seryl-[protein] + phosphate. The catalysed reaction is O-phospho-L-threonyl-[protein] + H2O = L-threonyl-[protein] + phosphate. Protein phosphatase that associates with over 200 regulatory proteins to form highly specific holoenzymes which dephosphorylate hundreds of biological targets. Protein phosphatase (PP1) is essential for cell division, it participates in the regulation of glycogen metabolism, muscle contractility and protein synthesis. Involved in regulation of ionic conductances and long-term synaptic plasticity. In Xenopus laevis (African clawed frog), this protein is Serine/threonine-protein phosphatase PP1-beta catalytic subunit (ppp1cb).